The following is a 677-amino-acid chain: Methionine--tRNA ligase (677 aa).

The 'HIGH' region signature appears at 15-25 (PYANGSIHLGH). Positions 146, 149, 159, and 162 each coordinate Zn(2+). A 'KMSKS' region motif is present at residues 333-337 (KMSKS). Residue Lys336 participates in ATP binding. The 103-residue stretch at 575-677 (DFAKIDLRVA…DGAKPGQQVK (103 aa)) folds into the tRNA-binding domain.

It belongs to the class-I aminoacyl-tRNA synthetase family. MetG type 1 subfamily. In terms of assembly, homodimer. It depends on Zn(2+) as a cofactor.

The protein resides in the cytoplasm. It catalyses the reaction tRNA(Met) + L-methionine + ATP = L-methionyl-tRNA(Met) + AMP + diphosphate. Is required not only for elongation of protein synthesis but also for the initiation of all mRNA translation through initiator tRNA(fMet) aminoacylation. This chain is Methionine--tRNA ligase, found in Salmonella paratyphi B (strain ATCC BAA-1250 / SPB7).